Reading from the N-terminus, the 839-residue chain is Phosphatidylinositol-glycan-specific phospholipase D (839 aa).

Positions Met-1–Pro-23 are cleaved as a signal peptide. Asn-94, Asn-271, Asn-292, Asn-307, and Asn-321 each carry an N-linked (GlcNAc...) asparagine glycan. FG-GAP repeat units lie at residues Ser-365–Arg-427, Lys-434–Ser-496, Ser-498–Arg-558, Asn-562–Arg-622, Gln-632–Arg-692, Ser-703–Asp-769, and Gln-787–Asp-839. Residues Asn-500, Asn-590, and Asn-658 are each glycosylated (N-linked (GlcNAc...) asparagine).

The protein belongs to the GPLD1 family. In terms of assembly, monomer. Post-translationally, glycosylated.

The protein localises to the secreted. The catalysed reaction is a 6-(alpha-D-glucosaminyl)-1-(1,2-diacyl-sn-glycero-3-phospho)-1D-myo-inositol + H2O = 6-(alpha-D-glucosaminyl)-1D-myo-inositol + a 1,2-diacyl-sn-glycero-3-phosphate + H(+). This protein hydrolyzes the inositol phosphate linkage in proteins anchored by phosphatidylinositol glycans (GPI-anchor) thus releasing these proteins from the membrane. The polypeptide is Phosphatidylinositol-glycan-specific phospholipase D (GPLD1) (Bos taurus (Bovine)).